Here is a 195-residue protein sequence, read N- to C-terminus: Flavin-dependent monooxygenase, reductase subunit HsaB (195 aa).

FAD is bound by residues 42–46, 48–49, 63–65, 69–70, and 95–96; these read PVGFA, QS, CPT, RS, and RF. 160–163 contacts NAD(+); it reads FYRG.

This sequence belongs to the non-flavoprotein flavin reductase family. As to quaternary structure, hsaAB monooxygenase consists of an oxygenase component HsaA and a reductase component HsaB.

It catalyses the reaction a reduced flavin + NAD(+) = an oxidized flavin + NADH + 2 H(+). Its pathway is lipid metabolism; steroid biosynthesis. Functionally, catalyzes the reduction of free flavins (FMN or FAD) by NADH. Subsequently, the reduced flavins diffuse to the HsaA oxygenase subunit. The protein is Flavin-dependent monooxygenase, reductase subunit HsaB (hsaB) of Rhodococcus jostii (strain RHA1).